The chain runs to 347 residues: Haptoglobin (347 aa).

Residues 1–18 (MRALGAVVTLLLWGQLFA) form the signal peptide. One can recognise a Sushi domain in the interval 31–88 (DSCPKPPEIANGYVEHLVRYRCRQFYRLRTEGDGVYTLNDEKQWVNTAAGEKLPECEA). 4 disulfides stabilise this stretch: Cys52-Cys86, Cys90-Cys207, Cys250-Cys281, and Cys292-Cys322. Residues 103-345 (IIGGSMDAKG…LKDWVQETMA (243 aa)) form the Peptidase S1 domain. Residues Asn148, Asn182, Asn256, and Asn264 are each glycosylated (N-linked (GlcNAc...) asparagine). The tract at residues 259 to 264 (VPEKKN) is interaction with CD163.

This sequence belongs to the peptidase S1 family. As to quaternary structure, tetramer of two alpha and two beta chains; disulfide-linked. The hemoglobin/haptoglobin complex is composed of a haptoglobin dimer bound to two hemoglobin alpha-beta dimers. Interacts with CD163. Interacts with ERGIC3. In terms of tissue distribution, expressed by the liver and secreted in plasma.

The protein localises to the secreted. Its function is as follows. As a result of hemolysis, hemoglobin is found to accumulate in the kidney and is secreted in the urine. Haptoglobin captures, and combines with free plasma hemoglobin to allow hepatic recycling of heme iron and to prevent kidney damage. Haptoglobin also acts as an antioxidant, has antibacterial activity and plays a role in modulating many aspects of the acute phase response. Hemoglobin/haptoglobin complexes are rapidly cleared by the macrophage CD163 scavenger receptor expressed on the surface of liver Kupfer cells through an endocytic lysosomal degradation pathway. This is Haptoglobin (Hp) from Mus saxicola (Brown spiny mouse).